The sequence spans 200 residues: METVLRVGVAGPVGSGKTALVDALCKALRDRYRLAVVTNDIYTQEDAQFLVRSQALPPERILGVETGGCPHTAIREDASLNLAAIQQLETAFRPLDLIFVESGGDNLAATFSPELVDLTIYVIDVAAGDKIPRKGGPGITKSDLLVINKIDLAPYVGADLEVMKRDTLKMRGDRPYVMTNLKTGLGLDQVIAFLTVHLAA.

11–18 contributes to the GTP binding site; the sequence is GPVGSGKT.

It belongs to the SIMIBI class G3E GTPase family. UreG subfamily. As to quaternary structure, homodimer. UreD, UreF and UreG form a complex that acts as a GTP-hydrolysis-dependent molecular chaperone, activating the urease apoprotein by helping to assemble the nickel containing metallocenter of UreC. The UreE protein probably delivers the nickel.

The protein resides in the cytoplasm. In terms of biological role, facilitates the functional incorporation of the urease nickel metallocenter. This process requires GTP hydrolysis, probably effectuated by UreG. This chain is Urease accessory protein UreG, found in Thermosynechococcus vestitus (strain NIES-2133 / IAM M-273 / BP-1).